The sequence spans 1314 residues: E3 ubiquitin-protein ligase RNF123 (1314 aa).

A2 carries the post-translational modification N-acetylalanine. The region spanning 74–254 is the B30.2/SPRY domain; the sequence is VDNEEEESQG…VAFNFGSRPL (181 aa). Phosphoserine is present on S675. At R683 the chain carries Asymmetric dimethylarginine. Positions 968–974 are interaction with NFKB1; that stretch reads WILVRLW. 8 residues coordinate Zn(2+): C1254, C1257, C1269, H1271, C1274, C1277, C1288, and C1291. The RING-type zinc-finger motif lies at 1254–1292; the sequence is CPICYAHPISAVFQPCGHKSCKACINQHLMNNKDCFFCK.

Component of the KPC complex composed of RNF123/KPC1 and UBAC1/KPC2. Interacts with UBAC1 and CDKN1B via its N-terminal domain. Interacts with RIGI (via N-terminus) and IFIH1 (via N-terminus). Ubiquitinated, leading to its degradation. Deubiquitinated by USP19, thereby stimulating CDKN1B ubiquitin-dependent degradation.

Its subcellular location is the cytoplasm. It carries out the reaction S-ubiquitinyl-[E2 ubiquitin-conjugating enzyme]-L-cysteine + [acceptor protein]-L-lysine = [E2 ubiquitin-conjugating enzyme]-L-cysteine + N(6)-ubiquitinyl-[acceptor protein]-L-lysine.. It participates in protein modification; protein ubiquitination. Catalytic subunit of the KPC complex that acts as E3 ubiquitin-protein ligase. Promotes the ubiquitination and proteasome-mediated degradation of CDKN1B which is the cyclin-dependent kinase inhibitor at the G0-G1 transition of the cell cycle. Also acts as a key regulator of the NF-kappa-B signaling by promoting maturation of the NFKB1 component of NF-kappa-B: acts by catalyzing ubiquitination of the NFKB1 p105 precursor, leading to limited proteasomal degradation of NFKB1 p105 and generation of the active NFKB1 p50 subunit. Also functions as an inhibitor of innate antiviral signaling mediated by RIGI and IFIH1 independently of its E3 ligase activity. Interacts with the N-terminal CARD domains of RIGI and IFIH1 and competes with the downstream adapter MAVS. This is E3 ubiquitin-protein ligase RNF123 from Homo sapiens (Human).